The primary structure comprises 96 residues: CRISPR-associated endoribonuclease Cas2 (96 aa).

Asp-8 provides a ligand contact to Mg(2+).

This sequence belongs to the CRISPR-associated endoribonuclease Cas2 protein family. Homodimer, forms a heterotetramer with a Cas1 homodimer. Mg(2+) serves as cofactor.

Functionally, CRISPR (clustered regularly interspaced short palindromic repeat), is an adaptive immune system that provides protection against mobile genetic elements (viruses, transposable elements and conjugative plasmids). CRISPR clusters contain sequences complementary to antecedent mobile elements and target invading nucleic acids. CRISPR clusters are transcribed and processed into CRISPR RNA (crRNA). Functions as a ssRNA-specific endoribonuclease. Involved in the integration of spacer DNA into the CRISPR cassette. The polypeptide is CRISPR-associated endoribonuclease Cas2 (Chlorobaculum tepidum (strain ATCC 49652 / DSM 12025 / NBRC 103806 / TLS) (Chlorobium tepidum)).